Here is a 406-residue protein sequence, read N- to C-terminus: Acetylornithine/succinyldiaminopimelate aminotransferase (406 aa).

Pyridoxal 5'-phosphate is bound by residues glycine 108–threonine 109 and phenylalanine 141. A N(2)-acetyl-L-ornithine-binding site is contributed by arginine 144. Aspartate 226–glutamine 229 lines the pyridoxal 5'-phosphate pocket. Lysine 255 carries the N6-(pyridoxal phosphate)lysine modification. Serine 283 lines the N(2)-acetyl-L-ornithine pocket. Residue threonine 284 participates in pyridoxal 5'-phosphate binding.

It belongs to the class-III pyridoxal-phosphate-dependent aminotransferase family. ArgD subfamily. As to quaternary structure, homodimer. Pyridoxal 5'-phosphate is required as a cofactor.

The protein resides in the cytoplasm. The catalysed reaction is N(2)-acetyl-L-ornithine + 2-oxoglutarate = N-acetyl-L-glutamate 5-semialdehyde + L-glutamate. It carries out the reaction N-succinyl-(2S,6S)-2,6-diaminopimelate + 2-oxoglutarate = (S)-2-succinylamino-6-oxoheptanedioate + L-glutamate. It functions in the pathway amino-acid biosynthesis; L-arginine biosynthesis; N(2)-acetyl-L-ornithine from L-glutamate: step 4/4. It participates in amino-acid biosynthesis; L-lysine biosynthesis via DAP pathway; LL-2,6-diaminopimelate from (S)-tetrahydrodipicolinate (succinylase route): step 2/3. In terms of biological role, involved in both the arginine and lysine biosynthetic pathways. In Escherichia coli O157:H7, this protein is Acetylornithine/succinyldiaminopimelate aminotransferase.